Reading from the N-terminus, the 290-residue chain is Thioredoxin-like protein 1 (290 aa).

Residues 24–104 form the Thioredoxin domain; sequence VDCYADWCGP…PQALKEKVAL (81 aa). Residues C31 and C34 are joined by a disulfide bond. The region spanning 118 to 290 is the PITH domain; it reads SSSAPVKGFA…SKGKLQKVEA (173 aa).

It is found in the cytoplasm. Its subcellular location is the nucleus. Has a role in cellular detoxification of alkyl hydroperoxide. This chain is Thioredoxin-like protein 1 (txl1), found in Schizosaccharomyces pombe (strain 972 / ATCC 24843) (Fission yeast).